A 322-amino-acid polypeptide reads, in one-letter code: Deoxyhypusine hydroxylase (322 aa).

2 HEAT-like PBS-type repeats span residues 76–102 (LKHEVAYVLGQTKNMAGAPLLRDVLAD) and 109–135 (VRHEAAEALGALNDVDSLDILEKYFKE). Fe cation-binding residues include H78, E79, H111, E112, H236, E237, H269, and E270. An HEAT-like PBS-type 3 repeat occupies 267 to 293 (VRHEAAEALGSIATDDVLPVLKEHLKD).

The protein belongs to the deoxyhypusine hydroxylase family. The cofactor is Fe(2+).

The protein resides in the cytoplasm. The protein localises to the nucleus. The catalysed reaction is [eIF5A protein]-deoxyhypusine + AH2 + O2 = [eIF5A protein]-hypusine + A + H2O. Its pathway is protein modification; eIF5A hypusination. Catalyzes the hydroxylation of the N(6)-(4-aminobutyl)-L-lysine intermediate to form hypusine, an essential post-translational modification only found in mature eIF-5A factor. The chain is Deoxyhypusine hydroxylase from Kluyveromyces lactis (strain ATCC 8585 / CBS 2359 / DSM 70799 / NBRC 1267 / NRRL Y-1140 / WM37) (Yeast).